Here is a 253-residue protein sequence, read N- to C-terminus: Ubiquinone biosynthesis O-methyltransferase (253 aa).

S-adenosyl-L-methionine-binding residues include R47, G78, D99, and M141.

It belongs to the methyltransferase superfamily. UbiG/COQ3 family.

It carries out the reaction a 3-demethylubiquinol + S-adenosyl-L-methionine = a ubiquinol + S-adenosyl-L-homocysteine + H(+). The enzyme catalyses a 3-(all-trans-polyprenyl)benzene-1,2-diol + S-adenosyl-L-methionine = a 2-methoxy-6-(all-trans-polyprenyl)phenol + S-adenosyl-L-homocysteine + H(+). It functions in the pathway cofactor biosynthesis; ubiquinone biosynthesis. Functionally, O-methyltransferase that catalyzes the 2 O-methylation steps in the ubiquinone biosynthetic pathway. The chain is Ubiquinone biosynthesis O-methyltransferase from Rhodopseudomonas palustris (strain BisA53).